Here is a 43-residue protein sequence, read N- to C-terminus: Potassium channel toxin gamma-KTx 4.6 (43 aa).

4 disulfides stabilise this stretch: cysteine 5-cysteine 23, cysteine 11-cysteine 34, cysteine 20-cysteine 39, and cysteine 24-cysteine 41.

It belongs to the ergtoxin family. Gamma-KTx 4 subfamily. In terms of tissue distribution, expressed by the venom gland.

The protein resides in the secreted. In terms of biological role, reversibly blocks Kv11/ERG potassium channels. The sequence is that of Potassium channel toxin gamma-KTx 4.6 from Centruroides limpidus (Mexican scorpion).